The sequence spans 271 residues: Mannosyl-3-phosphoglycerate phosphatase (271 aa).

Asp-13 acts as the Nucleophile in catalysis. Asp-13, Asp-15, and Asp-214 together coordinate Mg(2+).

Belongs to the HAD-like hydrolase superfamily. MPGP family. It depends on Mg(2+) as a cofactor.

The protein localises to the cytoplasm. The catalysed reaction is 2-O-(alpha-D-mannosyl)-3-phosphoglycerate + H2O = (2R)-2-O-(alpha-D-mannosyl)-glycerate + phosphate. The chain is Mannosyl-3-phosphoglycerate phosphatase from Escherichia coli O45:K1 (strain S88 / ExPEC).